A 138-amino-acid polypeptide reads, in one-letter code: Small ribosomal subunit protein uS8 (138 aa).

The protein belongs to the universal ribosomal protein uS8 family. Part of the 30S ribosomal subunit. Contacts proteins S5 and S12.

Its function is as follows. One of the primary rRNA binding proteins, it binds directly to 16S rRNA central domain where it helps coordinate assembly of the platform of the 30S subunit. This Thermus thermophilus (strain ATCC BAA-163 / DSM 7039 / HB27) protein is Small ribosomal subunit protein uS8 (rpsH).